The primary structure comprises 953 residues: Translation initiation factor IF-2 (953 aa).

2 disordered regions span residues serine 48–alanine 248 and threonine 279–lysine 363. Composition is skewed to basic and acidic residues over residues threonine 80–glutamine 89, phenylalanine 98–alanine 111, and glutamine 140–lysine 188. Polar residues predominate over residues arginine 191–serine 207. The span at arginine 229–alanine 248 shows a compositional bias: basic and acidic residues. Positions lysine 282–threonine 291 are enriched in polar residues. A compositionally biased stretch (basic and acidic residues) spans alanine 300–lysine 317. A compositionally biased stretch (low complexity) spans serine 322–asparagine 338. A compositionally biased stretch (basic residues) spans lysine 339–asparagine 348. The region spanning glutamate 454–lysine 623 is the tr-type G domain. A G1 region spans residues glycine 463 to threonine 470. Residue glycine 463–threonine 470 coordinates GTP. A G2 region spans residues glycine 488–histidine 492. Residues aspartate 509–glycine 512 are G3. Residues aspartate 509–histidine 513 and asparagine 563–aspartate 566 contribute to the GTP site. The G4 stretch occupies residues asparagine 563–aspartate 566. The G5 stretch occupies residues serine 599–lysine 601.

The protein belongs to the TRAFAC class translation factor GTPase superfamily. Classic translation factor GTPase family. IF-2 subfamily.

The protein resides in the cytoplasm. One of the essential components for the initiation of protein synthesis. Protects formylmethionyl-tRNA from spontaneous hydrolysis and promotes its binding to the 30S ribosomal subunits. Also involved in the hydrolysis of GTP during the formation of the 70S ribosomal complex. The chain is Translation initiation factor IF-2 from Streptococcus pyogenes serotype M18 (strain MGAS8232).